The chain runs to 221 residues: Probable septum site-determining protein MinC (221 aa).

It belongs to the MinC family. Interacts with MinD and FtsZ.

Cell division inhibitor that blocks the formation of polar Z ring septums. Rapidly oscillates between the poles of the cell to destabilize FtsZ filaments that have formed before they mature into polar Z rings. Prevents FtsZ polymerization. The protein is Probable septum site-determining protein MinC of Shewanella denitrificans (strain OS217 / ATCC BAA-1090 / DSM 15013).